The primary structure comprises 215 residues: Osmoprotectant import permease protein OsmW (215 aa).

Residues 18-202 enclose the ABC transmembrane type-1 domain; that stretch reads TFQHLWLVAL…LLAIVLDWLL (185 aa). The next 6 membrane-spanning stretches (helical) occupy residues 24–44, 51–73, 78–100, 132–152, 153–173, and 183–203; these read LVAL…VLIV, TPVL…GLMI, LIGH…LLPI, WVEI…AVVM, NIGV…LLLL, and MLIA…WLLH.

It belongs to the binding-protein-dependent transport system permease family. The complex is composed of two ATP-binding proteins (OsmV), two transmembrane proteins (OsmW and OsmY) and a solute-binding protein (OsmX).

It is found in the cell inner membrane. Functionally, part of the OsmU ABC transporter complex, which is involved in the uptake of osmoprotectants such as choline-O-sulfate and glycine betaine. Probably responsible for the translocation of the substrate across the membrane. This chain is Osmoprotectant import permease protein OsmW (osmW), found in Salmonella typhimurium (strain LT2 / SGSC1412 / ATCC 700720).